The following is a 179-amino-acid chain: Trypsin inhibitor (179 aa).

Gln1 is modified (pyrrolidone carboxylic acid). Disulfide bonds link Cys40–Cys85 and Cys132–Cys143.

The protein belongs to the protease inhibitor I3 (leguminous Kunitz-type inhibitor) family. Heterodimer of an alpha and a beta chain linked by a disulfide bond. As to expression, abundant in dry seeds.

It localises to the secreted. Its function is as follows. Inhibits trypsin, plasmin, human plasma kallikrein, chymotrypsin and factor XIIa activity. The protein is Trypsin inhibitor of Leucaena leucocephala (White popinac).